We begin with the raw amino-acid sequence, 452 residues long: C4-dicarboxylate transport protein 1 (452 aa).

9 helical membrane-spanning segments follow: residues 18–38 (FQVV…PSVG), 51–71 (LIKM…IAGM), 83–103 (LALL…LLLV), 151–171 (AFAK…GFAL), 191–211 (VLFT…FGAM), 229–249 (LMGA…GAIA), 304–324 (GYSF…VFIA), 337–357 (ITLL…TGSG), and 359–379 (IVLA…LALI). A disordered region spans residues 426–452 (WEEAQEPERVLDKKTEHMPVSAMSDAG). Residues 431 to 442 (EPERVLDKKTEH) are compositionally biased toward basic and acidic residues.

This sequence belongs to the dicarboxylate/amino acid:cation symporter (DAACS) (TC 2.A.23) family.

It localises to the cell inner membrane. Its function is as follows. Responsible for the transport of dicarboxylates such as succinate, fumarate, and malate from the periplasm across the membrane. This Polaromonas naphthalenivorans (strain CJ2) protein is C4-dicarboxylate transport protein 1.